The chain runs to 474 residues: Flotillin-like protein 3 (474 aa).

Residue C35 is the site of S-palmitoyl cysteine attachment. Coiled-coil stretches lie at residues E235–A255 and Q305–E325.

It belongs to the band 7/mec-2 family. Flotillin subfamily. In terms of processing, may be palmitoylated. As to expression, expressed in all plant organs. Primarily expressed in vascular tissues. No change in spatial expression in root upon inoculation. Expression limited to the nodule vascular tissue.

The protein localises to the cell membrane. It localises to the membrane. It is found in the caveola. Its function is as follows. May act as a scaffolding protein within caveolar membranes, functionally participating in formation of caveolae or caveolae-like vesicles. May be involved in nodule formation. The sequence is that of Flotillin-like protein 3 (FLOT3) from Medicago truncatula (Barrel medic).